A 238-amino-acid polypeptide reads, in one-letter code: 2-C-methyl-D-erythritol 4-phosphate cytidylyltransferase (238 aa).

It belongs to the IspD/TarI cytidylyltransferase family. IspD subfamily.

The catalysed reaction is 2-C-methyl-D-erythritol 4-phosphate + CTP + H(+) = 4-CDP-2-C-methyl-D-erythritol + diphosphate. The protein operates within isoprenoid biosynthesis; isopentenyl diphosphate biosynthesis via DXP pathway; isopentenyl diphosphate from 1-deoxy-D-xylulose 5-phosphate: step 2/6. Catalyzes the formation of 4-diphosphocytidyl-2-C-methyl-D-erythritol from CTP and 2-C-methyl-D-erythritol 4-phosphate (MEP). This chain is 2-C-methyl-D-erythritol 4-phosphate cytidylyltransferase, found in Aliivibrio fischeri (strain MJ11) (Vibrio fischeri).